The chain runs to 994 residues: Leucine-rich repeat receptor-like kinase protein FLORAL ORGAN NUMBER1 (994 aa).

A signal peptide spans 1-17; sequence MPPTLLLLLLLLPPSLA. LRR repeat units lie at residues 73–93, 94–117, 118–141, 147–171, 172–194, 195–219, 244–268, 269–292, 293–316, 318–340, 341–364, 365–388, 390–412, 413–436, 438–459, 460–483, 484–507, 509–531, 533–555, 556–579, and 581–604; these read AINL…IALL, DSLA…LPTL, PSLR…DSGG, FPSL…SASH, ARLR…SYGD, LAAL…LSRL, LGAL…LGRL, QRLD…LGDL, SSLA…LANL, NLKL…VAGF, AQLE…LGKN, GRLK…LCAG, RLEM…LGDC, KTLT…LFNL, QANM…VIGG, DKIG…IGNL, PALQ…IGNL, NLSR…LIRC, SLAA…ITSL, KILC…MSNM, and SLTT…QFLV. N-linked (GlcNAc...) asparagine glycans are attached at residues N75, N98, N124, N129, and N159. N256 carries N-linked (GlcNAc...) asparagine glycosylation. An N-linked (GlcNAc...) asparagine glycan is attached at N315. N-linked (GlcNAc...) asparagine glycosylation is present at N352. N-linked (GlcNAc...) asparagine glycans are attached at residues N495, N509, and N514. Residues N562 and N578 are each glycosylated (N-linked (GlcNAc...) asparagine). A glycan (N-linked (GlcNAc...) asparagine) is linked at N606. A helical membrane pass occupies residues 647-667; it reads KKMLVALVAAFAAVAVAFLGA. Residues 704 to 978 form the Protein kinase domain; that stretch reads VKEDNIIGKG…TMREVVHMLS (275 aa). Residues 710–718 and K731 contribute to the ATP site; that span reads IGKGGAGIV. D828 functions as the Proton acceptor in the catalytic mechanism.

It belongs to the protein kinase superfamily. Ser/Thr protein kinase family. Expressed in shoot apical meristem, and after transition to the reproductive phase, detected in the inflorescence and the floral meristems. Expressed uniformly throughout the meristems. Expressed also in floral organ primordia, such as the palea, lemma, lodicules, stamens, carpels and ovules.

Its subcellular location is the membrane. It catalyses the reaction L-seryl-[protein] + ATP = O-phospho-L-seryl-[protein] + ADP + H(+). The catalysed reaction is L-threonyl-[protein] + ATP = O-phospho-L-threonyl-[protein] + ADP + H(+). Functionally, receptor-like kinase protein that regulates the size of the floral meristem. The sequence is that of Leucine-rich repeat receptor-like kinase protein FLORAL ORGAN NUMBER1 (FON1) from Oryza sativa subsp. japonica (Rice).